The primary structure comprises 49 residues: Light-harvesting protein B-875 beta chain (49 aa).

The Cytoplasmic segment spans residues 2–27 (ADKSDLGYTGLTDEQAQELHSVYMSG). A bacteriochlorophyll contacts are provided by histidine 21 and histidine 39. The helical; Signal-anchor for type II membrane protein transmembrane segment at 28-45 (LWLFSAVAIVAHLAVYIW) threads the bilayer. Topologically, residues 46–49 (RPWF) are periplasmic.

This sequence belongs to the antenna complex beta subunit family. As to quaternary structure, the core complex is formed by different alpha and beta chains, binding bacteriochlorophyll molecules, and arranged most probably in tetrameric structures disposed around the reaction center. The non-pigmented gamma chains may constitute additional components.

The protein resides in the cell inner membrane. Its function is as follows. Antenna complexes are light-harvesting systems, which transfer the excitation energy to the reaction centers. This chain is Light-harvesting protein B-875 beta chain (pufB), found in Cereibacter sphaeroides (strain ATCC 17023 / DSM 158 / JCM 6121 / CCUG 31486 / LMG 2827 / NBRC 12203 / NCIMB 8253 / ATH 2.4.1.) (Rhodobacter sphaeroides).